Reading from the N-terminus, the 311-residue chain is JNK1/MAPK8-associated membrane protein (311 aa).

At 1-57 (MAVDIQPACLGLYCGKTLLFKNGSSEIYGECGVCPRGQRTNAQKYCQPCTESPELYD) the chain is on the lumenal side. Residue N22 is glycosylated (N-linked (GlcNAc...) asparagine). A helical transmembrane segment spans residues 58–78 (WLYLGFMAMLPLVLHWFFIEW). Residues 79–87 (YSGKKSSSA) lie on the Cytoplasmic side of the membrane. A helical membrane pass occupies residues 88-108 (LFQHITALFECTMAAIITLLV). The Lumenal segment spans residues 109–149 (SDPVGVLYIRSCRVLMLSDWYTMLYNPSPDYVTTVHCTHEA). The helical transmembrane segment at 150–170 (VYPLYTIVFVYYAFCLVLMML) threads the bilayer. Over 171–188 (LRPLLVKKIACGLGKSDR) the chain is Cytoplasmic. The chain crosses the membrane as a helical span at residues 189-209 (FKSIYAALYFFPILTVLQAVG). A topological domain (lumenal) is located at residue G210. Residues 211-231 (GLLYYAFPYIILVLSLVTLAV) traverse the membrane as a helical segment. Over 232–250 (YMSASEIENCYDLLVRKKR) the chain is Cytoplasmic. Residues 251–271 (LIVLFSHWLLHAYGIVSISRV) traverse the membrane as a helical segment. Over 272 to 277 (DRLEHD) the chain is Lumenal. Residues 278–298 (LPLLALVPTPALFYLFTAKFT) traverse the membrane as a helical segment. The Cytoplasmic segment spans residues 299–311 (EPSRILSEGANGH).

In terms of assembly, interacts with RNF5 and MAPK8, but not with MAPK9. Binding to MAPK8 occurs before and after exposure to stress, such as UV irradiation. After exposure to stress, interacts with phosphorylated MAPK8. Competes with DUSP10 for MAPK8 binding. Associates with multiple components of the proteasome and with ERAD regulatory proteins, including AMFR/GP78, CANX, PSMC1, PSMC2, PSMC3/TBP1, PSMC5, PSMC6, PSMD8, SEC61-ALPHA and UFD1. Ubiquitinated by RNF5 via 'Lys-63'-linked ubiquitin linkage in a UBE2N-dependent manner. Ubiquitination decreases association with components of the proteasome and ERAD. Expressed in numerous tissues, including brain, spleen, thymus, liver, kidney and testis.

The protein localises to the endoplasmic reticulum membrane. In terms of biological role, regulates the duration of MAPK8 activity in response to various stress stimuli. Facilitates degradation of misfolded endoplasmic reticulum (ER) proteins through the recruitment of components of the proteasome and endoplasmic reticulum-associated degradation (ERAD) system. In Mus musculus (Mouse), this protein is JNK1/MAPK8-associated membrane protein (Jkamp).